A 609-amino-acid chain; its full sequence is Laccase-1 (609 aa).

Residues 1–20 (MYLSTVLFPLLALNLGLSHA) form the signal peptide. The Plastocyanin-like 1 domain maps to 45-141 (VFTNGEYPGP…DGQVGAMYIR (97 aa)). N-linked (GlcNAc...) asparagine glycosylation is present at N75. H79, H81, H123, and H125 together coordinate Cu cation. N257 carries N-linked (GlcNAc...) asparagine glycosylation. In terms of domain architecture, Plastocyanin-like 2 spans 270 to 372 (TPSSVEPPVI…MSVYAILSYV (103 aa)). Residues N403, N443, and N486 are each glycosylated (N-linked (GlcNAc...) asparagine). The region spanning 463 to 602 (STPLLFEPDP…MGGMALALLD (140 aa)) is the Plastocyanin-like 3 domain. Residues H508, H511, and H513 each contribute to the Cu cation site. N-linked (GlcNAc...) asparagine glycans are attached at residues N531 and N546. Cu cation contacts are provided by H585, C586, H587, and H591.

Belongs to the multicopper oxidase family. It depends on Cu cation as a cofactor.

It localises to the secreted. The catalysed reaction is 4 hydroquinone + O2 = 4 benzosemiquinone + 2 H2O. Required for the conversion of the yellow polyketide pigment synthesized by wA to the conidial green pigment. In Emericella nidulans (strain FGSC A4 / ATCC 38163 / CBS 112.46 / NRRL 194 / M139) (Aspergillus nidulans), this protein is Laccase-1 (yA).